The sequence spans 178 residues: Large ribosomal subunit protein uL6 (178 aa).

The protein belongs to the universal ribosomal protein uL6 family. In terms of assembly, part of the 50S ribosomal subunit.

Its function is as follows. This protein binds to the 23S rRNA, and is important in its secondary structure. It is located near the subunit interface in the base of the L7/L12 stalk, and near the tRNA binding site of the peptidyltransferase center. This chain is Large ribosomal subunit protein uL6, found in Clavibacter sepedonicus (Clavibacter michiganensis subsp. sepedonicus).